The following is a 156-amino-acid chain: ATP synthase subunit b (156 aa).

The chain crosses the membrane as a helical span at residues 7–29; it reads LLGQAIAFFFFVTFCMKYVWPPL.

This sequence belongs to the ATPase B chain family. In terms of assembly, F-type ATPases have 2 components, F(1) - the catalytic core - and F(0) - the membrane proton channel. F(1) has five subunits: alpha(3), beta(3), gamma(1), delta(1), epsilon(1). F(0) has three main subunits: a(1), b(2) and c(10-14). The alpha and beta chains form an alternating ring which encloses part of the gamma chain. F(1) is attached to F(0) by a central stalk formed by the gamma and epsilon chains, while a peripheral stalk is formed by the delta and b chains.

The protein localises to the cell inner membrane. F(1)F(0) ATP synthase produces ATP from ADP in the presence of a proton or sodium gradient. F-type ATPases consist of two structural domains, F(1) containing the extramembraneous catalytic core and F(0) containing the membrane proton channel, linked together by a central stalk and a peripheral stalk. During catalysis, ATP synthesis in the catalytic domain of F(1) is coupled via a rotary mechanism of the central stalk subunits to proton translocation. Functionally, component of the F(0) channel, it forms part of the peripheral stalk, linking F(1) to F(0). The protein is ATP synthase subunit b of Photobacterium profundum (strain SS9).